The following is an 83-amino-acid chain: Exodeoxyribonuclease 7 small subunit (83 aa).

This sequence belongs to the XseB family. In terms of assembly, heterooligomer composed of large and small subunits.

The protein localises to the cytoplasm. It carries out the reaction Exonucleolytic cleavage in either 5'- to 3'- or 3'- to 5'-direction to yield nucleoside 5'-phosphates.. Bidirectionally degrades single-stranded DNA into large acid-insoluble oligonucleotides, which are then degraded further into small acid-soluble oligonucleotides. This chain is Exodeoxyribonuclease 7 small subunit, found in Sinorhizobium medicae (strain WSM419) (Ensifer medicae).